A 105-amino-acid polypeptide reads, in one-letter code: Biogenesis of lysosome-related organelles complex 1 subunit SNN1 (105 aa).

Residues 70–105 (WKDDNERLDSLRKRVDSLKSRFQSLKLRSDKLEQRE) are a coiled coil.

The protein belongs to the SNAPIN family. As to quaternary structure, component of the biogenesis of lysosome-related organelles complex-1 (BLOC-1).

Its subcellular location is the endosome. Component of the biogenesis of lysosome-related organelles complex-1 (BLOC-1), a complex involved in endosomal cargo sorting. The polypeptide is Biogenesis of lysosome-related organelles complex 1 subunit SNN1 (SNN1) (Zygosaccharomyces rouxii (strain ATCC 2623 / CBS 732 / NBRC 1130 / NCYC 568 / NRRL Y-229)).